We begin with the raw amino-acid sequence, 422 residues long: 5-hydroxytryptamine receptor 1A (422 aa).

Topologically, residues 1–38 are extracellular; sequence MDVFSFGQGNNTTASQEPFGTGGNVTSISDVTFSYQVI. 3 N-linked (GlcNAc...) asparagine glycosylation sites follow: Asn10, Asn11, and Asn24. A helical membrane pass occupies residues 39–59; that stretch reads TSLLLGTLIFCAVLGNACVVA. The Cytoplasmic segment spans residues 60 to 73; sequence AIALERSLQNVANY. The helical transmembrane segment at 74–98 threads the bilayer; that stretch reads LIGSLAVTDLMVSVLVLPMAALYQV. Topologically, residues 99-107 are extracellular; it reads LNKWTLGQV. A helical transmembrane segment spans residues 108 to 132; the sequence is TCDLFIALDVLCCTSSILHLCAIAL. Cys109 and Cys187 form a disulfide bridge. Residues Asp116 and Cys120 each contribute to the serotonin site. Positions 133 to 135 match the DRY motif; important for ligand-induced conformation changes motif; the sequence is DRY. Topologically, residues 133–152 are cytoplasmic; it reads DRYWAITDPIDYVNKRTPRR. The chain crosses the membrane as a helical span at residues 153–174; that stretch reads AAALISLTWLIGFLISIPPMLG. Over 175–193 the chain is Extracellular; it reads WRTPEDRSDPDACTISKDH. The chain crosses the membrane as a helical span at residues 194–216; it reads GYTIYSTFGAFYIPLLLMLVLYG. Residues 217-346 lie on the Cytoplasmic side of the membrane; that stretch reads RIFRAARFRI…LARERKTVKT (130 aa). The interval 235-261 is disordered; that stretch reads KKGAGTSLGTSSAPPPKKSLNGQPGSG. 1D-myo-inositol 4-phosphate-binding residues include Lys345, Thr346, and Gly352. A helical transmembrane segment spans residues 347-370; the sequence is LGIIMGTFILCWLPFFIVALVLPF. The Extracellular portion of the chain corresponds to 371–378; that stretch reads CESSCHMP. Residues 379-403 traverse the membrane as a helical segment; that stretch reads ALLGAIINWLGYSNSLLNPVIYAYF. The short motif at 396-400 is the NPxxY motif; important for ligand-induced conformation changes and signaling element; it reads NPVIY. 1D-myo-inositol 4-phosphate is bound by residues Phe403, Asn404, and Lys405. The Cytoplasmic portion of the chain corresponds to 404–422; that stretch reads NKDFQNAFKKIIKCKFCRR.

Belongs to the G-protein coupled receptor 1 family. 5-hydroxytryptamine receptor subfamily. HTR1A sub-subfamily. Heterodimer; heterodimerizes with GPER1. Interacts with YIF1B. Interacts with GPR39 and GALR1. As to expression, detected in hypothalamus, mesencephalon, amygdala, medulla, thalamus, septum and hippocampus.

The protein resides in the cell membrane. It localises to the cell projection. The protein localises to the dendrite. Its activity is regulated as follows. G-protein coupled receptor activity is regulated by lipids: phosphatidylinositol 4-phosphate increases HTR1A-mediated activity. Functionally, G-protein coupled receptor for 5-hydroxytryptamine (serotonin). Also functions as a receptor for various drugs and psychoactive substances. Ligand binding causes a conformation change that triggers signaling via guanine nucleotide-binding proteins (G proteins) and modulates the activity of downstream effectors, such as adenylate cyclase. HTR1A is coupled to G(i)/G(o) G alpha proteins and mediates inhibitory neurotransmission: signaling inhibits adenylate cyclase activity and activates a phosphatidylinositol-calcium second messenger system that regulates the release of Ca(2+) ions from intracellular stores. Beta-arrestin family members regulate signaling by mediating both receptor desensitization and resensitization processes. In Rattus norvegicus (Rat), this protein is 5-hydroxytryptamine receptor 1A.